Consider the following 259-residue polypeptide: Complement factor D (259 aa).

A signal peptide spans 1 to 21; the sequence is MADRSLHLVVLILLGTALCAA. A propeptide spans 22 to 26 (activation peptide); sequence QPRGR. A Peptidase S1 domain is found at 27–254; sequence ILRGQEAPSH…YVAWIDGVMA (228 aa). A disulfide bond links C52 and C68. Catalysis depends on charge relay system residues H67 and D115. 3 disulfide bridges follow: C149–C215, C180–C196, and C205–C230. Residue S209 is the Charge relay system of the active site. Residues 224 to 228 form a self-inhibitor loop region; sequence TSGSR.

The protein belongs to the peptidase S1 family. In terms of processing, CFD is activated by the removal of 5 residues at the N-terminus, named activation peptide, by the MASP-3 isoform of MASP1.

It localises to the secreted. It catalyses the reaction Selective cleavage of Arg-|-Lys bond in complement factor B when in complex with complement subcomponent C3b or with cobra venom factor.. Circulates in plasma in a mature but self-inhibited form. Activated by factor B (CFB), which displaces the self-inhibition loop. Associates with CFB complexed with complement C3b. Its function is as follows. Serine protease that initiates the alternative pathway of the complement system, a cascade of proteins that leads to phagocytosis and breakdown of pathogens and signaling that strengthens the adaptive immune system. In contrast to other complement pathways (classical, lectin and GZMK) that are directly activated by pathogens or antigen-antibody complexes, the alternative complement pathway is initiated by the spontaneous hydrolysis of complement C3. The alternative complement pathway acts as an amplification loop that enhances complement activation by mediating the formation of C3 and C5 convertases. Activated CFD cleaves factor B (CFB) when the latter is complexed with complement C3b, activating the C3 convertase of the alternative pathway. The sequence is that of Complement factor D (CFD) from Bos taurus (Bovine).